A 124-amino-acid polypeptide reads, in one-letter code: ATP synthase epsilon chain (124 aa).

This sequence belongs to the ATPase epsilon chain family. In terms of assembly, F-type ATPases have 2 components, CF(1) - the catalytic core - and CF(0) - the membrane proton channel. CF(1) has five subunits: alpha(3), beta(3), gamma(1), delta(1), epsilon(1). CF(0) has three main subunits: a, b and c.

The protein localises to the cell membrane. Functionally, produces ATP from ADP in the presence of a proton gradient across the membrane. The chain is ATP synthase epsilon chain from Corynebacterium glutamicum (strain ATCC 13032 / DSM 20300 / JCM 1318 / BCRC 11384 / CCUG 27702 / LMG 3730 / NBRC 12168 / NCIMB 10025 / NRRL B-2784 / 534).